The sequence spans 175 residues: Large ribosomal subunit protein uL10 (175 aa).

This sequence belongs to the universal ribosomal protein uL10 family. Part of the ribosomal stalk of the 50S ribosomal subunit. The N-terminus interacts with L11 and the large rRNA to form the base of the stalk. The C-terminus forms an elongated spine to which L12 dimers bind in a sequential fashion forming a multimeric L10(L12)X complex.

In terms of biological role, forms part of the ribosomal stalk, playing a central role in the interaction of the ribosome with GTP-bound translation factors. This chain is Large ribosomal subunit protein uL10, found in Thermobifida fusca (strain YX).